The following is a 333-amino-acid chain: Diaminopimelate epimerase (333 aa).

Asparagine 24 and asparagine 79 together coordinate substrate. The Proton donor role is filled by cysteine 88. Substrate-binding positions include glycine 89–asparagine 90, asparagine 176, asparagine 210, and glutamate 228–arginine 229. Cysteine 237 functions as the Proton acceptor in the catalytic mechanism. Glycine 238–threonine 239 is a substrate binding site.

Belongs to the diaminopimelate epimerase family. Homodimer.

The protein localises to the cytoplasm. It catalyses the reaction (2S,6S)-2,6-diaminopimelate = meso-2,6-diaminopimelate. It participates in amino-acid biosynthesis; L-lysine biosynthesis via DAP pathway; DL-2,6-diaminopimelate from LL-2,6-diaminopimelate: step 1/1. Catalyzes the stereoinversion of LL-2,6-diaminopimelate (L,L-DAP) to meso-diaminopimelate (meso-DAP), a precursor of L-lysine and an essential component of the bacterial peptidoglycan. In Clostridium acetobutylicum (strain ATCC 824 / DSM 792 / JCM 1419 / IAM 19013 / LMG 5710 / NBRC 13948 / NRRL B-527 / VKM B-1787 / 2291 / W), this protein is Diaminopimelate epimerase.